A 541-amino-acid polypeptide reads, in one-letter code: AT-rich interactive domain-containing protein 3A (541 aa).

The segment at 17–172 (RLQQELEARQ…KHPNPQAFPT (156 aa)) is disordered. The span at 55–73 (LKIQRAQAAALAAMRAAAA) shows a compositional bias: low complexity. Over residues 84–102 (SDEEEEDGESMASDEEDEK) the composition is skewed to acidic residues. Positions 103-112 (ERDGESERYP) are enriched in basic and acidic residues. A compositionally biased stretch (acidic residues) spans 115-144 (GSEEEDLKGKWDEDDFEDEGEEDDYEDMEE). Residues 212–304 (DPKRKEFLDD…YLYPYECEKR (93 aa)) enclose the ARID domain. The REKLES domain occupies 407–501 (AALEQLREKL…GVLFAQPPTS (95 aa)). The tract at residues 408-450 (ALEQLREKLESGEPPEKKMALGTEEQQRLQRAIQHNLLAMTAQ) is important for nuclear localization. The interval 452-473 (PMNIRINSQAEGRQDSAVNLTT) is homodimerization. The tract at residues 497–504 (QPPTSASG) is important for cytoplasmic localization. Residues 499-541 (PTSASGTSKGSSNRTGSIGGGSSTSQAAPPPAPSAPTSNNPSP) are disordered.

In terms of assembly, homodimer.

It is found in the nucleus. It localises to the cytoplasm. Its function is as follows. Transcription factor required for smad1 and smad2-mediated responses to TGFbeta during mesoderm induction. The polypeptide is AT-rich interactive domain-containing protein 3A (arid3a) (Xenopus tropicalis (Western clawed frog)).